The following is a 365-amino-acid chain: 25S rRNA (uridine(2843)-N(3))-methyltransferase (365 aa).

It belongs to the class I-like SAM-binding methyltransferase superfamily.

The protein localises to the cytoplasm. It localises to the nucleus. The catalysed reaction is uridine(2843) in 25S rRNA + S-adenosyl-L-methionine = N(3)-methyluridine(2843) in 25S rRNA + S-adenosyl-L-homocysteine + H(+). In terms of biological role, S-adenosyl-L-methionine-dependent methyltransferase that specifically methylates the N(3) position of uridine 2843 (m3U2843) in 25S rRNA. This Saccharomyces cerevisiae (strain ATCC 204508 / S288c) (Baker's yeast) protein is 25S rRNA (uridine(2843)-N(3))-methyltransferase (BMT6).